A 321-amino-acid polypeptide reads, in one-letter code: MSKPIQMEKGVKYRDADKMALIPVKNMPTEQKEVLRKPDWMKIKLPADSQRIQDIKAAMRKNKLHSVCEEASCPNLAECFNHGTATFMILGAICTRRCPFCDVAHGRPLPPEAEEPQKLARTIADMKLKYVVITSVDRDDLRDGGAQHFADCNREIRELNPDIKIETLVPDFRGRMDVALDLMKDNPPDVFNHNLETAPRLYRKARPGANYKWSLELLKKFKEQHPDVPTKSGLMMGLGETKEEIIEVLKDLRAHGVTMLTLGQYLAPSRHHLPVERYVPPSEFDELKEVALELGFTHAACGPFVRSSYHADMQAQGLEIK.

The [4Fe-4S] cluster site is built by C68, C73, C79, C94, C98, C101, and S308. Positions 80–297 (FNHGTATFMI…KEVALELGFT (218 aa)) constitute a Radical SAM core domain.

It belongs to the radical SAM superfamily. Lipoyl synthase family. The cofactor is [4Fe-4S] cluster.

The protein localises to the cytoplasm. The catalysed reaction is [[Fe-S] cluster scaffold protein carrying a second [4Fe-4S](2+) cluster] + N(6)-octanoyl-L-lysyl-[protein] + 2 oxidized [2Fe-2S]-[ferredoxin] + 2 S-adenosyl-L-methionine + 4 H(+) = [[Fe-S] cluster scaffold protein] + N(6)-[(R)-dihydrolipoyl]-L-lysyl-[protein] + 4 Fe(3+) + 2 hydrogen sulfide + 2 5'-deoxyadenosine + 2 L-methionine + 2 reduced [2Fe-2S]-[ferredoxin]. It functions in the pathway protein modification; protein lipoylation via endogenous pathway; protein N(6)-(lipoyl)lysine from octanoyl-[acyl-carrier-protein]: step 2/2. Functionally, catalyzes the radical-mediated insertion of two sulfur atoms into the C-6 and C-8 positions of the octanoyl moiety bound to the lipoyl domains of lipoate-dependent enzymes, thereby converting the octanoylated domains into lipoylated derivatives. The sequence is that of Lipoyl synthase from Vibrio parahaemolyticus serotype O3:K6 (strain RIMD 2210633).